Here is a 106-residue protein sequence, read N- to C-terminus: Glycoprotein GP16 (106 aa).

Glycosylated.

It localises to the host cytoplasm. Functionally, may be involved in formation or transport of the nucleocapsid-containing vesicles around the nuclear membrane. This is Glycoprotein GP16 (GP16) from Autographa californica nuclear polyhedrosis virus (AcMNPV).